A 403-amino-acid polypeptide reads, in one-letter code: MTTIEESLALIGRGTEEILKLDQLQARLATGKPLRVKAGFDPTAPDLHLGHTVLLNKMRQFQQLGHQVIFLIGDFTGMIGDPSGKNATRKPLSREDVLANARTYEEQVFKILDRERTEVRFNSEWFGQMSAADMIKLSAQHTVARMLERDDFAKRFGSQQPIAIHEFLYPLVQGYDSVALKADVELGGTDQKFNLLMGRGLQEHYGQAPQIVLTMPLLEGLDGVAKMSKSLGNYIGINEPAIDIVTKTMKIGDALTWRWIDLLSFDISMAEAARLKEEVASGELHPREVKLRLARELATRFHDAATAEQAIAGWHAVVTGQGDTGLLPLQEVVVPAEGLRLAGLLTAAGLTPSNSEATRKLKERAVKIDGEVVEDPGRVFTQGFEGVIQVGKRNFARVSLVTG.

The 'HIGH' region motif lies at 42–51 (PTAPDLHLGH). The 'KMSKS' region signature appears at 226-230 (KMSKS). K229 contacts ATP. The 62-residue stretch at 339-400 (LRLAGLLTAA…GKRNFARVSL (62 aa)) folds into the S4 RNA-binding domain.

It belongs to the class-I aminoacyl-tRNA synthetase family. TyrS type 2 subfamily. Homodimer.

The protein resides in the cytoplasm. It carries out the reaction tRNA(Tyr) + L-tyrosine + ATP = L-tyrosyl-tRNA(Tyr) + AMP + diphosphate + H(+). Functionally, catalyzes the attachment of tyrosine to tRNA(Tyr) in a two-step reaction: tyrosine is first activated by ATP to form Tyr-AMP and then transferred to the acceptor end of tRNA(Tyr). The polypeptide is Tyrosine--tRNA ligase (Xanthomonas axonopodis pv. citri (strain 306)).